A 658-amino-acid polypeptide reads, in one-letter code: UvrABC system protein B (658 aa).

One can recognise a Helicase ATP-binding domain in the interval 25 to 182 (ESLNGGNSHQ…KGLVDIQYSR (158 aa)). 38–45 (GVTGSGKT) contacts ATP. A Beta-hairpin motif is present at residues 91-114 (YYDYYQPEAYIPQTDTYIEKDASI). A Helicase C-terminal domain is found at 429 to 595 (QIDDLYSEIN…TVQKKVHDVI (167 aa)). A UVR domain is found at 622-657 (KELIAKLQEEMKQAAKELEFEKAAELRDLIMELKTA).

Belongs to the UvrB family. As to quaternary structure, forms a heterotetramer with UvrA during the search for lesions. Interacts with UvrC in an incision complex.

The protein localises to the cytoplasm. In terms of biological role, the UvrABC repair system catalyzes the recognition and processing of DNA lesions. A damage recognition complex composed of 2 UvrA and 2 UvrB subunits scans DNA for abnormalities. Upon binding of the UvrA(2)B(2) complex to a putative damaged site, the DNA wraps around one UvrB monomer. DNA wrap is dependent on ATP binding by UvrB and probably causes local melting of the DNA helix, facilitating insertion of UvrB beta-hairpin between the DNA strands. Then UvrB probes one DNA strand for the presence of a lesion. If a lesion is found the UvrA subunits dissociate and the UvrB-DNA preincision complex is formed. This complex is subsequently bound by UvrC and the second UvrB is released. If no lesion is found, the DNA wraps around the other UvrB subunit that will check the other stand for damage. The sequence is that of UvrABC system protein B from Natranaerobius thermophilus (strain ATCC BAA-1301 / DSM 18059 / JW/NM-WN-LF).